The sequence spans 528 residues: D-3-phosphoglycerate dehydrogenase (528 aa).

NAD(+)-binding positions include arginine 151 to isoleucine 152, aspartate 171, alanine 230 to arginine 232, and aspartate 256. Residue arginine 232 is part of the active site. Glutamate 261 is a catalytic residue. Histidine 279 serves as the catalytic Proton donor. Histidine 279–alanine 282 is a binding site for NAD(+). The ACT domain occupies asparagine 455–serine 528.

This sequence belongs to the D-isomer specific 2-hydroxyacid dehydrogenase family.

It carries out the reaction (2R)-3-phosphoglycerate + NAD(+) = 3-phosphooxypyruvate + NADH + H(+). The enzyme catalyses (R)-2-hydroxyglutarate + NAD(+) = 2-oxoglutarate + NADH + H(+). The protein operates within amino-acid biosynthesis; L-serine biosynthesis; L-serine from 3-phospho-D-glycerate: step 1/3. Its function is as follows. Catalyzes the reversible oxidation of 3-phospho-D-glycerate to 3-phosphonooxypyruvate, the first step of the phosphorylated L-serine biosynthesis pathway. Also catalyzes the reversible oxidation of 2-hydroxyglutarate to 2-oxoglutarate. In Mycobacterium leprae (strain TN), this protein is D-3-phosphoglycerate dehydrogenase (serA).